The sequence spans 238 residues: Sugar fermentation stimulation protein homolog (238 aa).

It belongs to the SfsA family.

This Vibrio vulnificus (strain CMCP6) protein is Sugar fermentation stimulation protein homolog.